The sequence spans 367 residues: Probable cinnamyl alcohol dehydrogenase (367 aa).

Cys-47 contacts Zn(2+). An NADP(+)-binding site is contributed by Thr-49. Zn(2+) is bound by residues His-69, Glu-70, Cys-100, Cys-103, Cys-106, Cys-114, and Cys-163. NADP(+)-binding positions include Thr-167, 188-193 (GLGGVG), 211-216 (SSSSKK), Thr-251, Gly-275, and 298-300 (SFI).

Belongs to the zinc-containing alcohol dehydrogenase family. Homodimer. The cofactor is Zn(2+).

The catalysed reaction is (E)-cinnamyl alcohol + NADP(+) = (E)-cinnamaldehyde + NADPH + H(+). It carries out the reaction (E)-coniferol + NADP(+) = (E)-coniferaldehyde + NADPH + H(+). The enzyme catalyses (E)-sinapyl alcohol + NADP(+) = (E)-sinapaldehyde + NADPH + H(+). It catalyses the reaction (E)-4-coumaroyl alcohol + NADP(+) = (E)-4-coumaraldehyde + NADPH + H(+). The catalysed reaction is (E)-caffeyl alcohol + NADP(+) = (E)-caffeyl aldehyde + NADPH + H(+). The protein operates within aromatic compound metabolism; phenylpropanoid biosynthesis. Its function is as follows. Involved in lignin biosynthesis. May catalyze the final step specific for the production of lignin monomers, like coniferyl alcohol, sinapyl alcohol and 4-coumaryl alcohol. The polypeptide is Probable cinnamyl alcohol dehydrogenase (Zea mays (Maize)).